The following is a 43-amino-acid chain: Jararafibrase-3 (43 aa).

One can recognise a C-type lectin domain in the interval Met10–Phe43.

Belongs to the true venom lectin family. Monomer. As to expression, expressed by the venom gland.

The protein localises to the secreted. With respect to regulation, inhibited by 1,10-phenanthroline and EDTA. In terms of biological role, may have both metalloproteinase and lectin activities. Induces local hemorrhage in the skin of rats. Degrades type-IV collagen, gelatin, laminin and fibronectin. Has hemagglutinating activity on red blood cells. This Bothrops jararaca (Jararaca) protein is Jararafibrase-3.